The chain runs to 397 residues: Oxysterol-binding protein homolog C354.07c (397 aa).

2 N-linked (GlcNAc...) asparagine glycosylation sites follow: asparagine 186 and asparagine 195.

It belongs to the OSBP family.

Its subcellular location is the endoplasmic reticulum. This is Oxysterol-binding protein homolog C354.07c from Schizosaccharomyces pombe (strain 972 / ATCC 24843) (Fission yeast).